The following is a 324-amino-acid chain: Serine carboxypeptidase II-1 (324 aa).

Residue N10 is glycosylated (N-linked (GlcNAc...) asparagine). S41 is a catalytic residue. 2 disulfide bridges follow: C109/C121 and C145/C170. A propeptide spans 150–162 (linker peptide); the sequence is LHRRRLIKGRRPW. N191 carries N-linked (GlcNAc...) asparagine glycosylation. Catalysis depends on residues D239 and H291.

It belongs to the peptidase S10 family. Carboxypeptidase II is a dimer, where each monomer is composed of two chains linked by a disulfide bond. The linker peptide is endoproteolytically excised during enzyme maturation.

It carries out the reaction Preferential release of a C-terminal arginine or lysine residue.. The chain is Serine carboxypeptidase II-1 (CXP;2-1) from Hordeum vulgare (Barley).